A 304-amino-acid chain; its full sequence is N-acetylmuramic acid 6-phosphate etherase (304 aa).

S2 carries the phosphoserine modification. An SIS domain is found at 59-222 (AYESFQNGGR…STAVMVKIGK (164 aa)). E87 (proton donor) is an active-site residue. The active site involves E118.

Belongs to the GCKR-like family. MurNAc-6-P etherase subfamily. In terms of assembly, homodimer.

It catalyses the reaction N-acetyl-D-muramate 6-phosphate + H2O = N-acetyl-D-glucosamine 6-phosphate + (R)-lactate. The protein operates within amino-sugar metabolism; N-acetylmuramate degradation. Specifically catalyzes the cleavage of the D-lactyl ether substituent of MurNAc 6-phosphate, producing GlcNAc 6-phosphate and D-lactate. The chain is N-acetylmuramic acid 6-phosphate etherase from Bacillus subtilis (strain 168).